The chain runs to 377 residues: Succinyl-diaminopimelate desuccinylase (377 aa).

H67 is a binding site for Zn(2+). D69 is a catalytic residue. D100 is a Zn(2+) binding site. The Proton acceptor role is filled by E134. Zn(2+) is bound by residues E135, E163, and H349.

As to quaternary structure, homodimer. It depends on Zn(2+) as a cofactor.

It carries out the reaction N-succinyl-(2S,6S)-2,6-diaminopimelate + H2O = (2S,6S)-2,6-diaminopimelate + succinate. It functions in the pathway amino-acid biosynthesis; L-lysine biosynthesis via DAP pathway; LL-2,6-diaminopimelate from (S)-tetrahydrodipicolinate (succinylase route): step 3/3. Competitively inhibited by L,L-DAP, D,L-DAP, 2-carboxyethylphosphonic acid (CEPA) and 5-mercaptopentanoic acid (MSPA). Succinate is a poor inhibitor. In terms of biological role, catalyzes the hydrolysis of N-succinyl-L,L-diaminopimelic acid (SDAP), forming succinate and LL-2,6-diaminopimelate (DAP), an intermediate involved in the bacterial biosynthesis of lysine and meso-diaminopimelic acid, an essential component of bacterial cell walls. It can only hydrolyze L,L-N-succinyl-diaminopimelic acid (L,L-SDAP) and is inactive toward D,L-, L,D-, and D,D-SDAP. The polypeptide is Succinyl-diaminopimelate desuccinylase (dapE) (Haemophilus influenzae (strain ATCC 51907 / DSM 11121 / KW20 / Rd)).